The chain runs to 257 residues: Short-chain dehydrogenase reductase 3a (257 aa).

12 to 36 contacts NAD(+); it reads IITGGASGIGAEAVRLFTDHGAKVV. Ser144 contributes to the substrate binding site. Tyr157 serves as the catalytic Proton acceptor.

Belongs to the short-chain dehydrogenases/reductases (SDR) family. Highly expressed in the radicle tip, lateral root primordia and tips, and the area surrounding the cotyledon hydathode of young seedlings.

Confers resistance to the incompatible pathogenic bacteria P.syringae pv. tomato DC3000 in a PR1-dependent manner. Seems not involved in abscisic acid (ABA) biosynthesis. The polypeptide is Short-chain dehydrogenase reductase 3a (SDR3a) (Arabidopsis thaliana (Mouse-ear cress)).